The chain runs to 236 residues: Ribonuclease 3 (236 aa).

The region spanning 7 to 136 is the RNase III domain; that stretch reads KSYILKKFNI…FIGALYLDQG (130 aa). E49 contributes to the Mg(2+) binding site. The active site involves D53. 2 residues coordinate Mg(2+): D122 and E125. E125 is a catalytic residue. The DRBM domain maps to 162 to 232; sequence DFKSRLQERL…ARAALKILED (71 aa).

This sequence belongs to the ribonuclease III family. As to quaternary structure, homodimer. Mg(2+) is required as a cofactor.

It localises to the cytoplasm. It catalyses the reaction Endonucleolytic cleavage to 5'-phosphomonoester.. Functionally, digests double-stranded RNA. Involved in the processing of primary rRNA transcript to yield the immediate precursors to the large and small rRNAs (23S and 16S). Processes some mRNAs, and tRNAs when they are encoded in the rRNA operon. Processes pre-crRNA and tracrRNA of type II CRISPR loci if present in the organism. This Leuconostoc mesenteroides subsp. mesenteroides (strain ATCC 8293 / DSM 20343 / BCRC 11652 / CCM 1803 / JCM 6124 / NCDO 523 / NBRC 100496 / NCIMB 8023 / NCTC 12954 / NRRL B-1118 / 37Y) protein is Ribonuclease 3.